The sequence spans 435 residues: GTPase Obg (435 aa).

An Obg domain is found at 6–164; it reads ADFVDRVKIF…RWLELELKIL (159 aa). In terms of domain architecture, OBG-type G spans 165-335; sequence ADVGLVGYPN…LVSKLASIVR (171 aa). Residues 171 to 178, 196 to 200, 217 to 220, 287 to 290, and 316 to 318 each bind GTP; these read GYPNVGKS, FTTLI, DIPG, NKID, and SAV. Residues serine 178 and threonine 198 each contribute to the Mg(2+) site. In terms of domain architecture, OCT spans 357–435; the sequence is RRLPEKFHLE…IGDFEFEYRE (79 aa).

The protein belongs to the TRAFAC class OBG-HflX-like GTPase superfamily. OBG GTPase family. Monomer. Mg(2+) is required as a cofactor.

It is found in the cytoplasm. Functionally, an essential GTPase which binds GTP, GDP and possibly (p)ppGpp with moderate affinity, with high nucleotide exchange rates and a fairly low GTP hydrolysis rate. Plays a role in control of the cell cycle, stress response, ribosome biogenesis and in those bacteria that undergo differentiation, in morphogenesis control. In Thermotoga maritima (strain ATCC 43589 / DSM 3109 / JCM 10099 / NBRC 100826 / MSB8), this protein is GTPase Obg.